The chain runs to 320 residues: MRQTKTGILLANLGTPDAPTPEAVKRYLKQFLSDRRVVDTSRLLWWPLLRGVILPLRSPRVAKLYASVWMEDGSPLMVYSRQQQQALAQRLPDTPVALGMSYGSPSLESSVDELLAEHVDHIVVLPLYPQFSCSTVGAVWDELARILARKRSIPGISFIRDYADNHDYINALANSVRASFAKHGEPDLLLLSYHGIPQRYADEGDDYPQRCRTTTRELASALGMVPEKVMMTFQSRFGREPWLMPYTDETLKMLGEKGVGHIQVMCPGFAADCLETLEEIAEQNREVFLGAGGKKYEYIPALNATPEHIEMMANLVAAYR.

Residues His-194 and Glu-275 each coordinate Fe cation.

It belongs to the ferrochelatase family. As to quaternary structure, monomer.

The protein localises to the cytoplasm. The enzyme catalyses heme b + 2 H(+) = protoporphyrin IX + Fe(2+). It participates in porphyrin-containing compound metabolism; protoheme biosynthesis; protoheme from protoporphyrin-IX: step 1/1. Its function is as follows. Catalyzes the ferrous insertion into protoporphyrin IX. The sequence is that of Ferrochelatase from Shigella flexneri serotype 5b (strain 8401).